Reading from the N-terminus, the 86-residue chain is Small ribosomal subunit protein uS17 (86 aa).

The protein belongs to the universal ribosomal protein uS17 family. Part of the 30S ribosomal subunit.

One of the primary rRNA binding proteins, it binds specifically to the 5'-end of 16S ribosomal RNA. The polypeptide is Small ribosomal subunit protein uS17 (Desulfotalea psychrophila (strain LSv54 / DSM 12343)).